The primary structure comprises 291 residues: MNLYLQLDLYLYNDNLYLYLYLESGVVPIPSPLEQFEIIPFLPMKIGDLYFSFTNPSLFMLLTLSLVLLLVHFVTKKGGGKSVPNAWQSLVELIYDFVPNLVNEQIGGLSGNVKQQFFPCIFVTFTFLLFCNLQGMIPYSFTVTSHFLITLGLSFSIFIGITIVGFQRNGLHFLSFLLPAGVPLPLAPFLVLLELISYCFRALSLGIRLFANMMAGHSLVKILSGFAWTMLCMNDLLYFIGDLGPLFIVLALTGPELGVAISQAHVSTISICIYLNDATNLHQTCLLFIYN.

6 helical membrane passes run 51–71, 117–137, 146–166, 173–193, 213–233, and 239–259; these read FSFTNPSLFMLLTLSLVLLLV, FFPCIFVTFTFLLFCNLQGMI, HFLITLGLSFSIFIGITIVGF, FLSFLLPAGVPLPLAPFLVLL, MMAGHSLVKILSGFAWTMLCM, and FIGDLGPLFIVLALTGPELGV.

It belongs to the ATPase A chain family. In terms of assembly, F-type ATPases have 2 components, CF(1) - the catalytic core - and CF(0) - the membrane proton channel. CF(1) has five subunits: alpha(3), beta(3), gamma(1), delta(1), epsilon(1). CF(0) has three main subunits: a, b and c.

The protein resides in the mitochondrion inner membrane. Its function is as follows. Mitochondrial membrane ATP synthase (F(1)F(0) ATP synthase or Complex V) produces ATP from ADP in the presence of a proton gradient across the membrane which is generated by electron transport complexes of the respiratory chain. F-type ATPases consist of two structural domains, F(1) - containing the extramembraneous catalytic core and F(0) - containing the membrane proton channel, linked together by a central stalk and a peripheral stalk. During catalysis, ATP synthesis in the catalytic domain of F(1) is coupled via a rotary mechanism of the central stalk subunits to proton translocation. Key component of the proton channel; it may play a direct role in the translocation of protons across the membrane. This is ATP synthase subunit a (ATP6) from Vicia faba (Broad bean).